The chain runs to 444 residues: Chromosomal replication initiator protein DnaA (444 aa).

The segment at 1-73 (MDSSAQQLWH…AEVVQDIVGY (73 aa)) is domain I, interacts with DnaA modulators. A domain II region spans residues 73 to 104 (YPVEIQLTAQQGDLIAIFQPHTSLESELSPTN). Residues 105-321 (QLNPKYNFSR…GALIRATTYI (217 aa)) are domain III, AAA+ region. G149, G151, K152, and T153 together coordinate ATP. Positions 322–444 (SISGLPMTVE…ERINSLSRNQ (123 aa)) are domain IV, binds dsDNA.

The protein belongs to the DnaA family. In terms of assembly, oligomerizes as a right-handed, spiral filament on DNA at oriC.

It is found in the cytoplasm. Functionally, plays an essential role in the initiation and regulation of chromosomal replication. ATP-DnaA binds to the origin of replication (oriC) to initiate formation of the DNA replication initiation complex once per cell cycle. Binds the DnaA box (a 9 base pair repeat at the origin) and separates the double-stranded (ds)DNA. Forms a right-handed helical filament on oriC DNA; dsDNA binds to the exterior of the filament while single-stranded (ss)DNA is stabiized in the filament's interior. The ATP-DnaA-oriC complex binds and stabilizes one strand of the AT-rich DNA unwinding element (DUE), permitting loading of DNA polymerase. After initiation quickly degrades to an ADP-DnaA complex that is not apt for DNA replication. Binds acidic phospholipids. The polypeptide is Chromosomal replication initiator protein DnaA (Microcystis aeruginosa (strain NIES-843 / IAM M-2473)).